Consider the following 161-residue polypeptide: TRAF-interacting protein with FHA domain-containing protein B (161 aa).

One can recognise an FHA domain in the interval 36 to 91 (LLLGRGQDAHLQLQLPRLSRRHLSLEPYLEKGSALLAFCLKALSRKGCVWVNGLTL).

Interacts with TIFA.

Functionally, inhibits TIFA-mediated TRAF6 activation possibly by inducing a conformational change in TIFA. In Homo sapiens (Human), this protein is TRAF-interacting protein with FHA domain-containing protein B.